Reading from the N-terminus, the 1043-residue chain is Isoleucine--tRNA ligase (1043 aa).

The 'HIGH' region motif lies at 49–59 (PFATGLPHYGH). A 'KMSKS' region motif is present at residues 592 to 596 (KMSKR). ATP is bound at residue Lys595.

This sequence belongs to the class-I aminoacyl-tRNA synthetase family. IleS type 2 subfamily. As to quaternary structure, monomer. The cofactor is Zn(2+).

The protein localises to the cytoplasm. The enzyme catalyses tRNA(Ile) + L-isoleucine + ATP = L-isoleucyl-tRNA(Ile) + AMP + diphosphate. Catalyzes the attachment of isoleucine to tRNA(Ile). As IleRS can inadvertently accommodate and process structurally similar amino acids such as valine, to avoid such errors it has two additional distinct tRNA(Ile)-dependent editing activities. One activity is designated as 'pretransfer' editing and involves the hydrolysis of activated Val-AMP. The other activity is designated 'posttransfer' editing and involves deacylation of mischarged Val-tRNA(Ile). This Chlamydia caviae (strain ATCC VR-813 / DSM 19441 / 03DC25 / GPIC) (Chlamydophila caviae) protein is Isoleucine--tRNA ligase.